The primary structure comprises 314 residues: Hydroxyacyl-coenzyme A dehydrogenase, mitochondrial (314 aa).

A mitochondrion-targeting transit peptide spans 1–12 (MAFATRQLVRSL). NAD(+)-binding positions include 34–39 (GGGLMG) and Asp57. The CoA site is built by Ser73 and Lys80. Residue Lys80 is modified to N6-succinyllysine. Residues Lys81 and Lys87 each carry the N6-acetyllysine; alternate modification. N6-succinyllysine; alternate is present on residues Lys81 and Lys87. Glu122 lines the NAD(+) pocket. N6-acetyllysine is present on Lys125. Position 127 (Lys127) interacts with NAD(+). The residue at position 127 (Lys127) is an N6-(2-hydroxyisobutyryl)lysine. Lys136 is subject to N6-acetyllysine; alternate. Position 136 is an N6-succinyllysine; alternate (Lys136). NAD(+)-binding residues include Ser149 and Asn173. Ser149 serves as a coordination point for CoA. An N6-acetyllysine modification is found at Lys179. An N6-acetyllysine; alternate mark is found at Lys185, Lys192, and Lys202. 3 positions are modified to N6-succinyllysine; alternate: Lys185, Lys192, and Lys202. Lys206 is subject to N6-succinyllysine. Residues Lys212 and Lys241 each carry the N6-acetyllysine; alternate modification. An N6-succinyllysine; alternate mark is found at Lys212 and Lys241. Residue Lys305 coordinates NAD(+). Residue Lys312 is modified to N6-acetyllysine; alternate. Lys312 carries the post-translational modification N6-succinyllysine; alternate.

This sequence belongs to the 3-hydroxyacyl-CoA dehydrogenase family. In terms of assembly, homodimer. Interacts with GLUD1; this interaction inhibits the activation of glutamate dehydrogenase 1 (GLUD1). Succinylation at Lys-81, adjacent to a coenzyme A binding site. Desuccinylated by SIRT5.

The protein localises to the mitochondrion matrix. The catalysed reaction is a (3S)-3-hydroxyacyl-CoA + NAD(+) = a 3-oxoacyl-CoA + NADH + H(+). It carries out the reaction (3S)-3-hydroxybutanoyl-CoA + NAD(+) = acetoacetyl-CoA + NADH + H(+). It catalyses the reaction (3S)-hydroxydecanoyl-CoA + NAD(+) = 3-oxodecanoyl-CoA + NADH + H(+). The enzyme catalyses (3S)-hydroxyhexadecanoyl-CoA + NAD(+) = 3-oxohexadecanoyl-CoA + NADH + H(+). It functions in the pathway lipid metabolism; fatty acid beta-oxidation. Mitochondrial fatty acid beta-oxidation enzyme that catalyzes the third step of the beta-oxidation cycle for medium and short-chain 3-hydroxy fatty acyl-CoAs (C4 to C10). Plays a role in the control of insulin secretion by inhibiting the activation of glutamate dehydrogenase 1 (GLUD1), an enzyme that has an important role in regulating amino acid-induced insulin secretion. Plays a role in the maintenance of normal spermatogenesis through the reduction of fatty acid accumulation in the testes. The sequence is that of Hydroxyacyl-coenzyme A dehydrogenase, mitochondrial (HADH) from Sus scrofa (Pig).